The primary structure comprises 457 residues: MQASRYSIEAEPGWYVSVQQPEEAVAAEEWSPLLSNEPRRQGSSGASFGLSVFNVMNAIMGSGILGLAYVMANTGILGFSFLLLLVALLASYSVHLLLAMCIHTAVTSYEDLGLFAFGLPGKVVVAGTIIIQNIGAMSSYLLIIKTELPAAISEVLPSDHSGAWYLDGQMLLIIICVGIVFPLSLLPKIGFLGYTSSLSFFFMVFFALVVVIKKWAVPCPLTLNCINAVFQISNATDDCKPKLFHFSKESVYAIPTMAFSFLCHTSVLPIYCELRSPSKKRMQNVTNTAIALSFLVYFVSALFGYLTFYDKVESELLQGYSKYLPHDAAVMAVKLCILFAVLLTVPLIHFPARKALMMILFSNYPFSWIRHSLTTLALNIIIVLLAIYVPDIRNVFGVVGASTSTCLIFVFPGLFYLKLSREDFLSWKKLGALSLLSTGTVVGSFSLVLIILDWVNK.

Met-1 is subject to N-acetylmethionine. Phosphoserine is present on residues Ser-4 and Ser-7. 5 consecutive transmembrane segments (helical) span residues 48-68 (FGLS…LGLA), 70-90 (VMAN…ALLA), 112-132 (LGLF…IIIQ), 171-191 (LLII…KIGF), and 192-212 (LGYT…VVVI). Cysteines 219 and 239 form a disulfide. Asn-234 is a glycosylation site (N-linked (GlcNAc...) asparagine). The chain crosses the membrane as a helical span at residues 251–271 (VYAIPTMAFSFLCHTSVLPIY). An N-linked (GlcNAc...) asparagine glycan is attached at Asn-284. 5 consecutive transmembrane segments (helical) span residues 289-309 (AIAL…LTFY), 328-348 (AAVM…VPLI), 372-392 (SLTT…VPDI), 395-415 (VFGV…PGLF), and 432-452 (ALSL…LIIL).

Belongs to the amino acid/polyamine transporter 2 family.

The protein localises to the cell membrane. It localises to the synapse. It carries out the reaction L-glutamine(out) = L-glutamine(in). It catalyses the reaction L-glutamate(out) = L-glutamate(in). In terms of biological role, amino acid transporter with an apparent selectivity for L-glutamine and L-glutamate. May facilitate glutamine uptake in excitatory neurons. The transport mechanism remains to be elucidated. This chain is Solute carrier family 38 member 6, found in Rattus norvegicus (Rat).